Reading from the N-terminus, the 234-residue chain is MAKHTFFVTGTDTGVGKTIVSAAILEAAKAAGKRTLAMKPIASGCDQTPEGLRNEDALMLQAAITEKLPYDTINPIALEPAIAPHVAAQQAGKQVTAQRIVGFCRGMQIRPADLLLIEGAGGWRVPLNDRETYAAVPGELKLPVILVVPLQLGCINHAMLSAEAIRADGLVVAGWVGNHPEEQVMSCEQDTLNYLSTHLGAPCLGVLPWLENTDTAEMPAILSRYLNITPLIEN.

14–19 (GVGKTI) lines the ATP pocket. Residue T18 participates in Mg(2+) binding. K39 is an active-site residue. Residue S43 coordinates substrate. Residues D56, 118-121 (EGAG), 178-179 (NH), and 208-210 (PWL) each bind ATP. The Mg(2+) site is built by D56 and E118.

This sequence belongs to the dethiobiotin synthetase family. Homodimer. It depends on Mg(2+) as a cofactor.

The protein localises to the cytoplasm. The catalysed reaction is (7R,8S)-7,8-diammoniononanoate + CO2 + ATP = (4R,5S)-dethiobiotin + ADP + phosphate + 3 H(+). Its pathway is cofactor biosynthesis; biotin biosynthesis; biotin from 7,8-diaminononanoate: step 1/2. Its function is as follows. Catalyzes a mechanistically unusual reaction, the ATP-dependent insertion of CO2 between the N7 and N8 nitrogen atoms of 7,8-diaminopelargonic acid (DAPA, also called 7,8-diammoniononanoate) to form a ureido ring. The chain is ATP-dependent dethiobiotin synthetase BioD from Marinobacter nauticus (strain ATCC 700491 / DSM 11845 / VT8) (Marinobacter aquaeolei).